A 171-amino-acid polypeptide reads, in one-letter code: Adenine phosphoribosyltransferase (171 aa).

This sequence belongs to the purine/pyrimidine phosphoribosyltransferase family. As to quaternary structure, homodimer.

It is found in the cytoplasm. The catalysed reaction is AMP + diphosphate = 5-phospho-alpha-D-ribose 1-diphosphate + adenine. The protein operates within purine metabolism; AMP biosynthesis via salvage pathway; AMP from adenine: step 1/1. Its function is as follows. Catalyzes a salvage reaction resulting in the formation of AMP, that is energically less costly than de novo synthesis. This chain is Adenine phosphoribosyltransferase, found in Synechococcus sp. (strain ATCC 27144 / PCC 6301 / SAUG 1402/1) (Anacystis nidulans).